A 498-amino-acid polypeptide reads, in one-letter code: Cytochrome P450 monooxygenase ltmP (498 aa).

A signal peptide spans 1–21; that stretch reads MLMLHAVPVGICLLLWYVVYG. Asn420 is a glycosylation site (N-linked (GlcNAc...) asparagine). Residue Cys435 participates in heme binding.

Belongs to the cytochrome P450 family. Requires heme as cofactor.

The protein operates within secondary metabolite biosynthesis. Cytochrome P450 monooxygenase; part of the gene clusters that mediates the biosynthesis of lolitrems, indole-diterpene mycotoxins that are potent tremorgens in mammals, and are synthesized by clavicipitaceous fungal endophytes in association with their grass hosts. The geranylgeranyl diphosphate (GGPP) synthase ltmG is proposed to catalyze the first step in lolitrem biosynthesis. LtmG catalyzes a series of iterative condensations of isopentenyl diphosphate (IPP) with dimethylallyl diphosphate (DMAPP), geranyl diphosphate (GPP), and farnesyl diphosphate (FPP), to form GGPP. GGPP then condenses with indole-3-glycerol phosphate to form 3-geranylgeranylindole, an acyclic intermediate, to be incorporated into paxilline. Either ltmG or ltmC could be responsible for this step, as both are putative prenyl transferases. The FAD-dependent monooxygenase ltmM then catalyzes the epoxidation of the two terminal alkenes of the geranylgeranyl moiety, which is subsequently cyclized by ltmB, to paspaline. The cytochrome P450 monooxygenases ltmQ and ltmP can sequentially oxidize paspaline to terpendole E and terpendole F. Alternatively, ltmP converts paspaline to an intermediate which is oxidized by ltmQ to terpendole F. LtmF, ltmK, ltmE and ltmJ appear to be unique to the epichloe endophytes. The prenyltransferase ltmF is involved in the 27-hydroxyl-O-prenylation. The cytochrome P450 monooxygenase ltmK is required for the oxidative acetal ring formation. The multi-functional prenyltransferase ltmE is required for C20- and C21-prenylations of the indole ring of paspalanes and acts together with the cytochrome P450 monooxygenase ltmJ to yield lolitremanes by multiple oxidations and ring closures. The stereoisomer pairs of lolitriol and lolitrem N or lolitrem B and lolitrem F may be attributed to variations in the way in which ring closure can occur under the action of ltmJ. While the major product of this pathway is lolitrem B, the prenyl transferases and cytochrome P450 monooxygenases identified in this pathway have a remarkable versatility in their regio- and stereo-specificities to generate a diverse range of metabolites that are products of a metabolic grid rather than a linear pathway. The chain is Cytochrome P450 monooxygenase ltmP from Epichloe festucae var. lolii (Neotyphodium lolii).